Here is a 233-residue protein sequence, read N- to C-terminus: Uridylate kinase (233 aa).

9–10 (GS) provides a ligand contact to ATP. Gly-43 is a binding site for UMP. 2 residues coordinate ATP: Gly-44 and Arg-48. UMP contacts are provided by residues Asp-65 and 113–119 (VTPGQTT). Residues Thr-139, Tyr-145, and Asp-148 each contribute to the ATP site.

It belongs to the UMP kinase family. Homohexamer.

It localises to the cytoplasm. The catalysed reaction is UMP + ATP = UDP + ADP. It participates in pyrimidine metabolism; CTP biosynthesis via de novo pathway; UDP from UMP (UMPK route): step 1/1. With respect to regulation, inhibited by UTP. Functionally, catalyzes the reversible phosphorylation of UMP to UDP. The chain is Uridylate kinase from Methanosarcina mazei (strain ATCC BAA-159 / DSM 3647 / Goe1 / Go1 / JCM 11833 / OCM 88) (Methanosarcina frisia).